The chain runs to 301 residues: Nitric oxide synthase-interacting protein (301 aa).

Residue Ser36 is modified to Phosphoserine. The interval 55-75 (DPVVTPDGYLYEREAILEYIL) is U-box-like. The Nuclear localization signal signature appears at 78–101 (KKEIARQMKAYEKQRGTRREEQKE). The residue at position 107 (Ser107) is a Phosphoserine. The segment at 132 to 157 (KALSGTSPDDVQPGPSVGPPSKDKDK) is disordered.

The protein belongs to the NOSIP family. Interacts with NOS1 and NOS3. Interacts with PP2A holoenzyme, containing PPP2CA, PPP2CB, PPP2R1A and PPP2R2A subunits. Expressed in heart, brain and lung. Present in endothelial cells (at protein level).

Its subcellular location is the cytoplasm. The protein localises to the nucleus. The enzyme catalyses S-ubiquitinyl-[E2 ubiquitin-conjugating enzyme]-L-cysteine + [acceptor protein]-L-lysine = [E2 ubiquitin-conjugating enzyme]-L-cysteine + N(6)-ubiquitinyl-[acceptor protein]-L-lysine.. Functionally, E3 ubiquitin-protein ligase that is essential for proper development of the forebrain, the eye, and the face. Catalyzes monoubiquitination of serine/threonine-protein phosphatase 2A (PP2A) catalytic subunit PPP2CA/PPP2CB. Negatively regulates nitric oxide production by inducing NOS1 and NOS3 translocation to actin cytoskeleton and inhibiting their enzymatic activity. In Homo sapiens (Human), this protein is Nitric oxide synthase-interacting protein (NOSIP).